The primary structure comprises 606 residues: Mitogen-activated protein kinase kinase kinase 7 (606 aa).

The interaction with MAPK8IP1 stretch occupies residues 1–300 (MSTASAASSS…FPGADEPLQY (300 aa)). The Protein kinase domain maps to 36-291 (IEVEEVVGRG…KIMTHLMRYF (256 aa)). ATP contacts are provided by residues 42-50 (VGRGAFGVV) and Lys-63. Residue Lys-72 forms a Glycyl lysine isopeptide (Lys-Gly) (interchain with G-Cter in ubiquitin) linkage. Catalysis depends on Asp-156, which acts as the Proton acceptor. Lys-158 is covalently cross-linked (Glycyl lysine isopeptide (Lys-Gly) (interchain with G-Cter in ubiquitin)). (Microbial infection) O-acetylthreonine; by Yersinia YopJ; alternate occurs at positions 184 and 187. A phosphothreonine; by autocatalysis; alternate mark is found at Thr-184 and Thr-187. The residue at position 192 (Ser-192) is a Phosphoserine; by autocatalysis. Lys-209 participates in a covalent cross-link: Glycyl lysine isopeptide (Lys-Gly) (interchain with G-Cter in ubiquitin). The disordered stretch occupies residues 301-338 (PCQYSDEGQSNSATSTGSFMDIASTNTSNKSDTNMEQV). Residues 306–338 (DEGQSNSATSTGSFMDIASTNTSNKSDTNMEQV) are compositionally biased toward polar residues. Thr-341 carries the post-translational modification (Microbial infection) O-acetylthreonine; by Yersinia YopJ; alternate. Residues 354–391 (KNQAKQQSESGRLSLGASRGSSVESLPPTSEGKRMSAD) form a disordered region. Residues 361 to 375 (SESGRLSLGASRGSS) are compositionally biased toward low complexity. Phosphoserine occurs at positions 367, 389, and 439. Residues 443–452 (LTVTGTEPGQ) show a composition bias toward polar residues. Residues 443 to 493 (LTVTGTEPGQVSSRSSSPSVRMITTSGPTSEKPTRSHPWTPDDSTDTNGSD) form a disordered region. (Microbial infection) O-acetylthreonine; by Yersinia YopJ; alternate occurs at positions 444, 446, and 448. The span at 453 to 463 (VSSRSSSPSVR) shows a compositional bias: low complexity. The residue at position 455 (Ser-455) is a Phosphoserine. Over residues 464–473 (MITTSGPTSE) the composition is skewed to polar residues. Thr-467 is subject to (Microbial infection) O-acetylthreonine; by Yersinia YopJ; alternate.

Belongs to the protein kinase superfamily. STE Ser/Thr protein kinase family. MAP kinase kinase kinase subfamily. Can form homodimer. Binds both upstream activators and downstream substrates in multimolecular complexes. Interacts with TAB1/MAP3K7IP1, TAB2/MAP3K7IP2 and TAB3/MAP3K7IP3. Identified in the TRIKA2 complex composed of MAP3K7/TAK1, TAB1/MAP3K7IP1 and TAB2/MAP3K7IP2. Interacts with PPM1L and PPM1B/PP2CB. Interaction with PP2A and PPP6C leads to its repressed activity. Interacts with TRAF6 and TAB1/MAP3K7IP1; during IL-1 signaling. Interacts with TAOK1 and TAOK2; interaction with TAOK2 interferes with MAP3K7 interaction with IKKA, thus preventing NF-kappa-B activation. Interacts with DYNC2I2 (via WD domains). Interacts with CYLD and RBCK1. Interacts with TGFBR1; induces MAP3K7/TAK1 activation by TRAF6. Interacts with MAPK8IP1 and SMAD6. Interacts with isoform 1 of VRK2. Interacts with DAB2; the interaction is induced by TGF-beta stimulation and may mediate TGF-beta stimulated JNK activation. Interacts with TRIM5. Part of a complex containing ITCH, NDFIP1 and MAP3K7. Interacts with IFIT5; the interaction synergizes the recruitment of IKK to MAP3K7 and enhances IKK phosphorylation. Interacts with PLEKHM1 (via N- and C-terminus). Interacts with TRIM8. Found in a complex with SH3RF1, RAC2, MAP2K7/MKK7, MAPK8IP1/JIP1, MAPK8/JNK1 and MAPK9/JNK2. Interacts with SASH1. Interacts with RIPK1. As to quaternary structure, (Microbial infection) Interacts with herpes simplex virus 2 protein US2; this interaction induces MAP3K7 phosphorylation and subsequent activation. The cofactor is Mg(2+). Post-translationally, association with TAB1/MAP3K7IP1 promotes autophosphorylation at Ser-192 and subsequent activation. Association with TAB2/MAP3K7IP2, itself associated with free unanchored Lys-63 polyubiquitin chain, promotes autophosphorylation and subsequent activation of MAP3K7. Dephosphorylation at Ser-192 by PPM1B/PP2CB and at Thr-187 by PP2A and PPP6C leads to inactivation. 'Lys-48'-linked polyubiquitination at Lys-72 is induced by TNFalpha, and leads to proteasomal degradation. Undergoes 'Lys-48'-linked polyubiquitination catalyzed by ITCH. Requires 'Lys-63'-linked polyubiquitination for autophosphorylation and subsequent activation. 'Lys-63'-linked ubiquitination does not lead to proteasomal degradation. Deubiquitinated by CYLD, a protease that selectively cleaves 'Lys-63'-linked ubiquitin chains. Deubiquitinated by Y.enterocolitica YopP. Deubiquitinated by USP19; leading to negative regulation of TNF-alpha- and IL-1beta-triggered NF-kappa-B activation. In terms of processing, (Microbial infection) Cleaved and inactivated by the proteases 3C of coxsackievirus A16 and human enterovirus D68, allowing the virus to disrupt TRAF6-triggered NF-kappa-B induction. Post-translationally, (Microbial infection) Acetylation of Thr-184 and Thr-187 by Yersinia YopJ prevents phosphorylation and activation, thus blocking the MAPK signaling pathway. In terms of tissue distribution, isoform 1A is the most abundant in ovary, skeletal muscle, spleen and blood mononuclear cells. Isoform 1B is highly expressed in brain, kidney and small intestine. Isoform 1C is the major form in prostate. Isoform 1D is the less abundant form.

The protein localises to the cytoplasm. It is found in the cell membrane. It catalyses the reaction L-seryl-[protein] + ATP = O-phospho-L-seryl-[protein] + ADP + H(+). It carries out the reaction L-threonyl-[protein] + ATP = O-phospho-L-threonyl-[protein] + ADP + H(+). With respect to regulation, activated by pro-inflammatory cytokines and in response to physical and chemical stresses, including osmotic stress, oxidative stress, arsenic and ultraviolet light irradiation. Activated by 'Lys-63'-linked polyubiquitination and by autophosphorylation. Association with TAB1/MAP3K7IP1 and TAB2/MAP3K7IP2 promotes activation through autophosphorylation, whereas PPM1B/PP2CB, PP2A and PPP6C dephosphorylation leads to inactivation. Ceramides are also able to activate MAP3K7/TAK1. Its function is as follows. Serine/threonine kinase which acts as an essential component of the MAP kinase signal transduction pathway. Plays an important role in the cascades of cellular responses evoked by changes in the environment. Mediates signal transduction of TRAF6, various cytokines including interleukin-1 (IL-1), transforming growth factor-beta (TGFB), TGFB-related factors like BMP2 and BMP4, toll-like receptors (TLR), tumor necrosis factor receptor CD40 and B-cell receptor (BCR). Once activated, acts as an upstream activator of the MKK/JNK signal transduction cascade and the p38 MAPK signal transduction cascade through the phosphorylation and activation of several MAP kinase kinases like MAP2K1/MEK1, MAP2K3/MKK3, MAP2K6/MKK6 and MAP2K7/MKK7. These MAP2Ks in turn activate p38 MAPKs and c-jun N-terminal kinases (JNKs); both p38 MAPK and JNK pathways control the transcription factors activator protein-1 (AP-1). Independently of MAP2Ks and p38 MAPKs, acts as a key activator of NF-kappa-B by promoting activation of the I-kappa-B-kinase (IKK) core complex. Mechanistically, recruited to polyubiquitin chains of RIPK2 and IKBKG/NEMO via TAB2/MAP3K7IP2 and TAB3/MAP3K7IP3, and catalyzes phosphorylation and activation of IKBKB/IKKB component of the IKK complex, leading to NF-kappa-B activation. In osmotic stress signaling, plays a major role in the activation of MAPK8/JNK1, but not that of NF-kappa-B. Promotes TRIM5 capsid-specific restriction activity. Phosphorylates RIPK1 at 'Ser-321' which positively regulates RIPK1 interaction with RIPK3 to promote necroptosis but negatively regulates RIPK1 kinase activity and its interaction with FADD to mediate apoptosis. Phosphorylates STING1 in response to cGAMP-activation, promoting association between STEEP1 and STING1 and STING1 translocation to COPII vesicles. This chain is Mitogen-activated protein kinase kinase kinase 7, found in Homo sapiens (Human).